Reading from the N-terminus, the 412-residue chain is Cytochrome p450 CYP199A2 (412 aa).

Substrate contacts are provided by residues 94–97 and serine 247; that span reads RPPS. Position 361 (cysteine 361) interacts with heme.

The protein belongs to the cytochrome P450 family. In terms of assembly, interacts with the ferredoxin-like iron-sulfur protein ThcC. The cofactor is heme.

It localises to the cytoplasm. The catalysed reaction is 4-methoxybenzoate + AH2 + O2 = 4-hydroxybenzoate + formaldehyde + A + H2O. Functionally, the oxidative demethylation of 4-methoxybenzoate requires the participation of the monooxygenase CYP199A2, the ferredoxin-like protein ThcC/RPA1872 and a ferredoxin reductase to mediate the transfer of electrons from NADH to CYP199A2. It is also active with 4-ethylbenzoate. The polypeptide is Cytochrome p450 CYP199A2 (Rhodopseudomonas palustris (strain ATCC BAA-98 / CGA009)).